Here is a 235-residue protein sequence, read N- to C-terminus: Motile sperm domain-containing protein 3 (235 aa).

Disordered stretches follow at residues 1–30 (MRRG…PSGP) and 143–170 (ELQG…PFPE). The 113-residue stretch at 33 to 145 (PVLVFPPDLV…RAPAYPLELQ (113 aa)) folds into the MSP domain. 2 helical membrane-spanning segments follow: residues 180–200 (SFLL…LPLQ) and 213–233 (VSLG…MVFL).

Its subcellular location is the membrane. The chain is Motile sperm domain-containing protein 3 (MOSPD3) from Bos taurus (Bovine).